Here is a 438-residue protein sequence, read N- to C-terminus: uncharacterized protein (438 aa).

This is an uncharacterized protein from Methanocaldococcus jannaschii (strain ATCC 43067 / DSM 2661 / JAL-1 / JCM 10045 / NBRC 100440) (Methanococcus jannaschii).